The chain runs to 266 residues: Glutamate racemase 1 (266 aa).

Substrate is bound by residues 11–12 (DS) and 43–44 (YG). Cys74 serves as the catalytic Proton donor/acceptor. 75 to 76 (NT) is a binding site for substrate. Cys182 functions as the Proton donor/acceptor in the catalytic mechanism. 183–184 (TH) is a substrate binding site.

This sequence belongs to the aspartate/glutamate racemases family.

It catalyses the reaction L-glutamate = D-glutamate. It functions in the pathway cell wall biogenesis; peptidoglycan biosynthesis. In terms of biological role, provides the (R)-glutamate required for cell wall biosynthesis. The protein is Glutamate racemase 1 of Caldanaerobacter subterraneus subsp. tengcongensis (strain DSM 15242 / JCM 11007 / NBRC 100824 / MB4) (Thermoanaerobacter tengcongensis).